The sequence spans 564 residues: Myb-like protein F (564 aa).

3 disordered regions span residues 22-107, 122-203, and 310-410; these read YNNS…NYNN, NYNN…YNGG, and NYNN…TKKY. The segment covering 23–79 has biased composition (low complexity); the sequence is NNSNHYNDNNDNNNNNNNNNNDNNNNDNNNNNNNNNNSIINNESDNESNGTSNNYND. Basic and acidic residues predominate over residues 82 to 96; it reads NDNHHHHQDDEHHGN. Composition is skewed to low complexity over residues 97–107, 135–173, 193–203, and 310–364; these read GNDNDNENYNN, EINS…NNSK, NNNNNNKYNGG, and NYNN…NSSN. The span at 365–409 shows a compositional bias: basic and acidic residues; the sequence is KEYKEKEYKEKEYKEKEFKESKDSSLKRKSSSDDDGDDSGRDTKK. The SANT domain maps to 412-464; it reads PGRTVWTLEEEELYKEVFNHYGKNWKKIKTHFPDKSKSQVTSHGQYLIKINKL. A compositionally biased stretch (low complexity) spans 519-556; the sequence is NNENTNDNNNHNNNNYNDNNNNSNNNNNFNNSNNNNTN. The interval 519-564 is disordered; that stretch reads NNENTNDNNNHNNNNYNDNNNNSNNNNNFNNSNNNNTNKFIDEDDD.

Its subcellular location is the nucleus. The chain is Myb-like protein F (mybF) from Dictyostelium discoideum (Social amoeba).